The chain runs to 117 residues: Immunoglobulin heavy variable 5-10-1 (117 aa).

The N-terminal stretch at 1–19 (MGSTAILALLLAVLQGVCA) is a signal peptide. The segment at 20–44 (EVQLVQSGAEVKKPGESLRISCKGS) is framework-1. In terms of domain architecture, Ig-like spans 20 to 117 (EVQLVQSGAE…SDTAMYYCAR (98 aa)). A disulfide bond links Cys41 and Cys115. The interval 45-52 (GYSFTSYW) is complementarity-determining-1. A framework-2 region spans residues 53-69 (ISWVRQMPGKGLEWMGR). The segment at 70-77 (IDPSDSYT) is complementarity-determining-2. Residues 78–115 (NYSPSFQGHVTISADKSISTAYLQWSSLKASDTAMYYC) are framework-3. The interval 116–117 (AR) is complementarity-determining-3.

In terms of assembly, immunoglobulins are composed of two identical heavy chains and two identical light chains; disulfide-linked.

Its subcellular location is the secreted. The protein localises to the cell membrane. In terms of biological role, v region of the variable domain of immunoglobulin heavy chains that participates in the antigen recognition. Immunoglobulins, also known as antibodies, are membrane-bound or secreted glycoproteins produced by B lymphocytes. In the recognition phase of humoral immunity, the membrane-bound immunoglobulins serve as receptors which, upon binding of a specific antigen, trigger the clonal expansion and differentiation of B lymphocytes into immunoglobulins-secreting plasma cells. Secreted immunoglobulins mediate the effector phase of humoral immunity, which results in the elimination of bound antigens. The antigen binding site is formed by the variable domain of one heavy chain, together with that of its associated light chain. Thus, each immunoglobulin has two antigen binding sites with remarkable affinity for a particular antigen. The variable domains are assembled by a process called V-(D)-J rearrangement and can then be subjected to somatic hypermutations which, after exposure to antigen and selection, allow affinity maturation for a particular antigen. The sequence is that of Immunoglobulin heavy variable 5-10-1 from Homo sapiens (Human).